The primary structure comprises 50 residues: Photosystem II reaction center protein M (50 aa).

Residues 7 to 27 form a helical membrane-spanning segment; sequence GFVASLLFVGVPTIFLIGLFI.

It belongs to the PsbM family. As to quaternary structure, PSII is composed of 1 copy each of membrane proteins PsbA, PsbB, PsbC, PsbD, PsbE, PsbF, PsbH, PsbI, PsbJ, PsbK, PsbL, PsbM, PsbT, PsbX, PsbY, Psb30/Ycf12, peripheral proteins PsbO, CyanoQ (PsbQ), PsbU, PsbV and a large number of cofactors. It forms dimeric complexes.

Its subcellular location is the cellular thylakoid membrane. Functionally, one of the components of the core complex of photosystem II (PSII). PSII is a light-driven water:plastoquinone oxidoreductase that uses light energy to abstract electrons from H(2)O, generating O(2) and a proton gradient subsequently used for ATP formation. It consists of a core antenna complex that captures photons, and an electron transfer chain that converts photonic excitation into a charge separation. This subunit is found at the monomer-monomer interface. This Prochlorococcus marinus (strain MIT 9515) protein is Photosystem II reaction center protein M.